Consider the following 250-residue polypeptide: 5-oxoprolinase subunit A (250 aa).

The protein belongs to the LamB/PxpA family. In terms of assembly, forms a complex composed of PxpA, PxpB and PxpC.

The enzyme catalyses 5-oxo-L-proline + ATP + 2 H2O = L-glutamate + ADP + phosphate + H(+). In terms of biological role, catalyzes the cleavage of 5-oxoproline to form L-glutamate coupled to the hydrolysis of ATP to ADP and inorganic phosphate. The polypeptide is 5-oxoprolinase subunit A (Staphylococcus aureus (strain MW2)).